The following is a 335-amino-acid chain: Holliday junction branch migration complex subunit RuvB (335 aa).

A large ATPase domain (RuvB-L) region spans residues 4–184 (ADRLIQPTAL…FGIVQRLEFY (181 aa)). ATP is bound by residues I23, R24, G65, K68, T69, T70, 131–133 (EDY), R174, Y184, and R221. T69 lines the Mg(2+) pocket. Residues 185–255 (NIKDLTQIVK…VASAALDMLD (71 aa)) are small ATPAse domain (RuvB-S). The segment at 258–335 (KEGFDYMDRK…LHFGYDYEPN (78 aa)) is head domain (RuvB-H). DNA is bound by residues R294, R313, and R318.

It belongs to the RuvB family. As to quaternary structure, homohexamer. Forms an RuvA(8)-RuvB(12)-Holliday junction (HJ) complex. HJ DNA is sandwiched between 2 RuvA tetramers; dsDNA enters through RuvA and exits via RuvB. An RuvB hexamer assembles on each DNA strand where it exits the tetramer. Each RuvB hexamer is contacted by two RuvA subunits (via domain III) on 2 adjacent RuvB subunits; this complex drives branch migration. In the full resolvosome a probable DNA-RuvA(4)-RuvB(12)-RuvC(2) complex forms which resolves the HJ.

It localises to the cytoplasm. The enzyme catalyses ATP + H2O = ADP + phosphate + H(+). Its function is as follows. The RuvA-RuvB-RuvC complex processes Holliday junction (HJ) DNA during genetic recombination and DNA repair, while the RuvA-RuvB complex plays an important role in the rescue of blocked DNA replication forks via replication fork reversal (RFR). RuvA specifically binds to HJ cruciform DNA, conferring on it an open structure. The RuvB hexamer acts as an ATP-dependent pump, pulling dsDNA into and through the RuvAB complex. RuvB forms 2 homohexamers on either side of HJ DNA bound by 1 or 2 RuvA tetramers; 4 subunits per hexamer contact DNA at a time. Coordinated motions by a converter formed by DNA-disengaged RuvB subunits stimulates ATP hydrolysis and nucleotide exchange. Immobilization of the converter enables RuvB to convert the ATP-contained energy into a lever motion, pulling 2 nucleotides of DNA out of the RuvA tetramer per ATP hydrolyzed, thus driving DNA branch migration. The RuvB motors rotate together with the DNA substrate, which together with the progressing nucleotide cycle form the mechanistic basis for DNA recombination by continuous HJ branch migration. Branch migration allows RuvC to scan DNA until it finds its consensus sequence, where it cleaves and resolves cruciform DNA. This is Holliday junction branch migration complex subunit RuvB from Pseudoalteromonas atlantica (strain T6c / ATCC BAA-1087).